The chain runs to 491 residues: Chromosomal replication initiator protein DnaA (491 aa).

The interval 1-68 is domain I, interacts with DnaA modulators; sequence MTSIWGQIQH…RTAACGVIGD (68 aa). Positions 68–146 are domain II; it reads DTVEVVVTAG…PLDWAPVPQS (79 aa). Residues 147 to 364 form a domain III, AAA+ region region; it reads RTNWRFSFDD…SCLHNLILKA (218 aa). ATP contacts are provided by Gly190, Gly192, Lys193, and Thr194. Residues 365–491 form a domain IV, binds dsDNA region; the sequence is KLLNRQISLE…RNGRITHARH (127 aa).

The protein belongs to the DnaA family. In terms of assembly, oligomerizes as a right-handed, spiral filament on DNA at oriC.

Its subcellular location is the cytoplasm. Its function is as follows. Plays an essential role in the initiation and regulation of chromosomal replication. ATP-DnaA binds to the origin of replication (oriC) to initiate formation of the DNA replication initiation complex once per cell cycle. Binds the DnaA box (a 9 base pair repeat at the origin) and separates the double-stranded (ds)DNA. Forms a right-handed helical filament on oriC DNA; dsDNA binds to the exterior of the filament while single-stranded (ss)DNA is stabiized in the filament's interior. The ATP-DnaA-oriC complex binds and stabilizes one strand of the AT-rich DNA unwinding element (DUE), permitting loading of DNA polymerase. After initiation quickly degrades to an ADP-DnaA complex that is not apt for DNA replication. Binds acidic phospholipids. The chain is Chromosomal replication initiator protein DnaA from Nitratidesulfovibrio vulgaris (strain ATCC 29579 / DSM 644 / CCUG 34227 / NCIMB 8303 / VKM B-1760 / Hildenborough) (Desulfovibrio vulgaris).